Reading from the N-terminus, the 323-residue chain is tRNA dimethylallyltransferase (323 aa).

13 to 20 (GPTASGKT) serves as a coordination point for ATP. 15 to 20 (TASGKT) is a substrate binding site. Interaction with substrate tRNA stretches follow at residues 42 to 45 (DSAL), 166 to 170 (QRIQR), 251 to 256 (RCVGYR), and 284 to 291 (KRQITWLR).

Belongs to the IPP transferase family. As to quaternary structure, monomer. The cofactor is Mg(2+).

It catalyses the reaction adenosine(37) in tRNA + dimethylallyl diphosphate = N(6)-dimethylallyladenosine(37) in tRNA + diphosphate. Catalyzes the transfer of a dimethylallyl group onto the adenine at position 37 in tRNAs that read codons beginning with uridine, leading to the formation of N6-(dimethylallyl)adenosine (i(6)A). The polypeptide is tRNA dimethylallyltransferase (Acidovorax ebreus (strain TPSY) (Diaphorobacter sp. (strain TPSY))).